The chain runs to 396 residues: tRNA (guanine-N(7)-)-methyltransferase (396 aa).

S-adenosyl-L-methionine is bound by residues Glu125, Glu150, and Asp177. The substrate site is built by Lys203 and Asp233.

The protein belongs to the class I-like SAM-binding methyltransferase superfamily. TrmB family.

It carries out the reaction guanosine(46) in tRNA + S-adenosyl-L-methionine = N(7)-methylguanosine(46) in tRNA + S-adenosyl-L-homocysteine. It participates in tRNA modification; N(7)-methylguanine-tRNA biosynthesis. Its function is as follows. Catalyzes the formation of N(7)-methylguanine at position 46 (m7G46) in tRNA. The protein is tRNA (guanine-N(7)-)-methyltransferase of Helicobacter hepaticus (strain ATCC 51449 / 3B1).